The following is a 915-amino-acid chain: Scaffold attachment factor B1 (915 aa).

Residues 1-24 (MAETLSGLGDSGAAGAAALSSASS) are compositionally biased toward low complexity. The segment at 1-33 (MAETLSGLGDSGAAGAAALSSASSETGTRRLSD) is disordered. Ala2 carries the N-acetylalanine modification. Phosphoserine occurs at positions 24 and 55. Positions 31–65 (LSDLRVIDLRAELRKRNVDSSGNKSVLMERLKKAI) constitute an SAP domain. The disordered stretch occupies residues 64-118 (AIEDEGGNPDEIEITSEGNKKTSKRSSKGRKPEEEGVEDNGLEENSGDGQEDVET). The span at 67–77 (DEGGNPDEIEI) shows a compositional bias: acidic residues. Ser79 bears the Phosphoserine mark. A compositionally biased stretch (acidic residues) spans 98-118 (EGVEDNGLEENSGDGQEDVET). Glycyl lysine isopeptide (Lys-Gly) (interchain with G-Cter in SUMO2) cross-links involve residues Lys172 and Lys186. Thr188 is modified (phosphothreonine). Phosphoserine is present on residues Ser195, Ser197, and Ser209. A disordered region spans residues 221 to 407 (LGETCKSEPV…EKGRSSCGRN (187 aa)). Over residues 225–234 (CKSEPVKEES) the composition is skewed to basic and acidic residues. Lys231 participates in a covalent cross-link: Glycyl lysine isopeptide (Lys-Gly) (interchain with G-Cter in SUMO). A compositionally biased stretch (polar residues) spans 275-286 (SESTAHAQSSKA). A compositionally biased stretch (basic and acidic residues) spans 293-309 (VKREPAEQPGDGERTDC). Lys294 participates in a covalent cross-link: Glycyl lysine isopeptide (Lys-Gly) (interchain with G-Cter in SUMO). Over residues 319-330 (EQSSAASELAEA) the composition is skewed to low complexity. Basic and acidic residues predominate over residues 346–359 (EARDSKEDGRKFDF). Polar residues predominate over residues 371-383 (ESSTSEGADQKMS). Lys381 participates in a covalent cross-link: Glycyl lysine isopeptide (Lys-Gly) (interchain with G-Cter in SUMO2). Phosphoserine occurs at positions 383 and 384. The span at 390–401 (DTKRLSKEEKGR) shows a compositional bias: basic and acidic residues. A Glycyl lysine isopeptide (Lys-Gly) (interchain with G-Cter in SUMO2) cross-link involves residue Lys392. Positions 406–484 (RNFWVSGLSS…KMISVEKAKN (79 aa)) constitute an RRM domain. Ser415 carries the post-translational modification Phosphoserine. 2 stretches are compositionally biased toward basic and acidic residues: residues 477 to 551 (ISVE…ERSR) and 559 to 570 (GTERTVVMDKSK). Disordered regions lie at residues 477–641 (ISVE…EREE), 671–708 (RERM…ERRP), and 749–915 (FDHR…TRRY). Glycyl lysine isopeptide (Lys-Gly) (interchain with G-Cter in SUMO2) cross-links involve residues Lys483, Lys514, Lys543, and Lys570. The interaction with POLR2A. Interaction with SFRS1; SFRS9 and SFRS10 stretch occupies residues 528-792 (GDDGSGEKSK…RHGGPERHGR (265 aa)). Residue Lys578 forms a Glycyl lysine isopeptide (Lys-Gly) (interchain with G-Cter in SUMO1); alternate linkage. Lys578 is covalently cross-linked (Glycyl lysine isopeptide (Lys-Gly) (interchain with G-Cter in SUMO2); alternate). A phosphoserine mark is found at Ser580, Ser582, Ser601, and Ser604. A compositionally biased stretch (basic and acidic residues) spans 581-641 (GSKERASKSQ…RMQAQWEREE (61 aa)). Residues 599-616 (KRSVVSFDKVKEPRKSRD) carry the Nuclear localization signal motif. The tract at residues 599 to 915 (KRSVVSFDKV…PSDARFTRRY (317 aa)) is interaction with SAFB2. At Lys607 the chain carries N6-acetyllysine. Basic and acidic residues predominate over residues 749–796 (FDHRDRGRYPDHSVDRREGSRSMMGEREGQHYPERHGGPERHGRDSRD). At Arg811 the chain carries Omega-N-methylarginine. 2 stretches are compositionally biased toward basic and acidic residues: residues 817-832 (PRRD…DDRS) and 841-851 (MMDRDHKRWQG). Residue Lys847 forms a Glycyl lysine isopeptide (Lys-Gly) (interchain with G-Cter in SUMO2) linkage. 3 positions are modified to asymmetric dimethylarginine: Arg868, Arg874, and Arg884. The segment covering 892 to 901 (GMQGGFGGQS) has biased composition (gly residues). The segment covering 905-915 (RPSDARFTRRY) has biased composition (basic and acidic residues).

In terms of assembly, monomer and homodimer. Forms heterodimers with SAFB2. Interacts with KHDRBS3. Interacts with CLK2. Interacts with POLR2A, SRSF1/ASF, SRSF9/SRp30c and SFSF10/TRA2B. Interacts with isoform 1 and isoform 2 of SRPK1 and inhibits its activity. Interacts with RBMX. Interacts with FUS. Interacts with ZBED4. Sumoylated by PIAS1 with SUMO1 and SUMO2/3, desumoylated by SENP1. Sumoylation is required for transcriptional repressor activity. In terms of tissue distribution, ubiquitous. Expressed at high levels in the CNS and at low levels in the liver. Expressed in a wide number of breast cancer cell lines.

The protein localises to the nucleus. Its function is as follows. Binds to scaffold/matrix attachment region (S/MAR) DNA and forms a molecular assembly point to allow the formation of a 'transcriptosomal' complex (consisting of SR proteins and RNA polymerase II) coupling transcription and RNA processing. Functions as an estrogen receptor corepressor and can also bind to the HSP27 promoter and decrease its transcription. Thereby acts as a negative regulator of cell proliferation. When associated with RBMX, binds to and stimulates transcription from the SREBF1 promoter. This chain is Scaffold attachment factor B1 (SAFB), found in Homo sapiens (Human).